The primary structure comprises 148 residues: Arginine repressor (148 aa).

Belongs to the ArgR family.

The protein localises to the cytoplasm. It functions in the pathway amino-acid biosynthesis; L-arginine biosynthesis [regulation]. Functionally, regulates arginine biosynthesis genes. The protein is Arginine repressor of Acidobacterium capsulatum (strain ATCC 51196 / DSM 11244 / BCRC 80197 / JCM 7670 / NBRC 15755 / NCIMB 13165 / 161).